The primary structure comprises 295 residues: Phosphoribosylaminoimidazole-succinocarboxamide synthase (295 aa).

The protein belongs to the SAICAR synthetase family.

It catalyses the reaction 5-amino-1-(5-phospho-D-ribosyl)imidazole-4-carboxylate + L-aspartate + ATP = (2S)-2-[5-amino-1-(5-phospho-beta-D-ribosyl)imidazole-4-carboxamido]succinate + ADP + phosphate + 2 H(+). The protein operates within purine metabolism; IMP biosynthesis via de novo pathway; 5-amino-1-(5-phospho-D-ribosyl)imidazole-4-carboxamide from 5-amino-1-(5-phospho-D-ribosyl)imidazole-4-carboxylate: step 1/2. The protein is Phosphoribosylaminoimidazole-succinocarboxamide synthase of Nitrosomonas europaea (strain ATCC 19718 / CIP 103999 / KCTC 2705 / NBRC 14298).